The sequence spans 177 residues: MSRIGKKPVPLPKGVTASISGQSIEVKGPKGTRSFSATDDVTLALDEGSVKVTPRGTSKRARQQWGMVRSQVENLVTGVTSGFKKELEISGVGYRAQMAGNVLKLSLGYSHDVNFEVPAGVTVTTPKQTEITVEGIDQQLVGQVAANIREWRRPEPYKGKGIRYKDEFIFRKEGKKK.

Belongs to the universal ribosomal protein uL6 family. As to quaternary structure, part of the 50S ribosomal subunit.

Functionally, this protein binds to the 23S rRNA, and is important in its secondary structure. It is located near the subunit interface in the base of the L7/L12 stalk, and near the tRNA binding site of the peptidyltransferase center. This chain is Large ribosomal subunit protein uL6, found in Cereibacter sphaeroides (strain ATCC 17029 / ATH 2.4.9) (Rhodobacter sphaeroides).